The chain runs to 243 residues: Small ribosomal subunit protein eS4 (243 aa).

Residues 43 to 105 (IPLLYIVRDY…TGEHYRVLPN (63 aa)) enclose the S4 RNA-binding domain.

It belongs to the eukaryotic ribosomal protein eS4 family. Part of the 30S ribosomal subunit.

In Pyrococcus furiosus (strain ATCC 43587 / DSM 3638 / JCM 8422 / Vc1), this protein is Small ribosomal subunit protein eS4.